The chain runs to 104 residues: Co-chaperonin GroES (104 aa).

This sequence belongs to the GroES chaperonin family. In terms of assembly, heptamer of 7 subunits arranged in a ring. Interacts with the chaperonin GroEL.

The protein localises to the cytoplasm. In terms of biological role, together with the chaperonin GroEL, plays an essential role in assisting protein folding. The GroEL-GroES system forms a nano-cage that allows encapsulation of the non-native substrate proteins and provides a physical environment optimized to promote and accelerate protein folding. GroES binds to the apical surface of the GroEL ring, thereby capping the opening of the GroEL channel. This chain is Co-chaperonin GroES, found in Acidiphilium cryptum (strain JF-5).